Reading from the N-terminus, the 444-residue chain is Probable glycine dehydrogenase (decarboxylating) subunit 1 (444 aa).

It belongs to the GcvP family. N-terminal subunit subfamily. In terms of assembly, the glycine cleavage system is composed of four proteins: P, T, L and H. In this organism, the P 'protein' is a heterodimer of two subunits.

It carries out the reaction N(6)-[(R)-lipoyl]-L-lysyl-[glycine-cleavage complex H protein] + glycine + H(+) = N(6)-[(R)-S(8)-aminomethyldihydrolipoyl]-L-lysyl-[glycine-cleavage complex H protein] + CO2. In terms of biological role, the glycine cleavage system catalyzes the degradation of glycine. The P protein binds the alpha-amino group of glycine through its pyridoxal phosphate cofactor; CO(2) is released and the remaining methylamine moiety is then transferred to the lipoamide cofactor of the H protein. The polypeptide is Probable glycine dehydrogenase (decarboxylating) subunit 1 (Chlorobaculum tepidum (strain ATCC 49652 / DSM 12025 / NBRC 103806 / TLS) (Chlorobium tepidum)).